A 176-amino-acid chain; its full sequence is Scytalone dehydratase-like protein AacuK (176 aa).

Y26 and Y46 together coordinate substrate. Catalysis depends on residues H81 and H107.

It belongs to the scytalone dehydratase family.

It functions in the pathway secondary metabolite biosynthesis. Its function is as follows. Scytalone dehydratase-like protein; part of the gene cluster that mediates the biosynthesis of the tetrahydroxanthone dimer secalonic acid D. The pathway begins with the synthesis of atrochrysone thioester by the polyketide synthase AacuL. The atrochrysone carboxyl ACP thioesterase AacuM then breaks the thioester bond and releases the atrochrysone carboxylic acid from AacuL. Atrochrysone carboxylic acid is decarboxylated by the decarboxylase AacuI, and oxidized by the anthrone oxygenase AacuG to yield emodin. Emodin is then reduced to emodin hydroquinone by a yet unidentified oxidoreductase. A-ring reduction by the short chain dehydrogenase AacuN, dehydration by the scytalone dehydratase-like protein AacuK and probable spontaneous re-oxidation, results in overall deoxygenation to chrysophanol. Baeyer-Villiger oxidation by the Baeyer-Villiger monooxygenase (BVMO) AacuH then yields monodictyphenone. Monodictyphenone is transformed into compounds with the tetrahydroxanthone skeleton via methylesterification by the methyltransferase AacuQ, followed by the action of the flavin-dependent monooxygenase AacuC, the isomerase AacuP, and the short chain dehydrogenase/reductase AacuF or AacuD. AacuF and AacuD should accept the same compound as a substrate but perform the ketoreduction with a different stereoselectivity, thus yielding blennolides B and A, respectively. In the final step of the biosynthesis, the cytochrome P450 monooxygenase AacuE accepts blennolide B and/or blennolide A to conduct the dimerization reaction to furnish the tetrahydroxanthone dimers, secalonic acids D, B, and F. The chain is Scytalone dehydratase-like protein AacuK from Aspergillus aculeatus (strain ATCC 16872 / CBS 172.66 / WB 5094).